The following is a 497-amino-acid chain: Galactose-1-phosphate uridylyltransferase (497 aa).

It belongs to the galactose-1-phosphate uridylyltransferase type 2 family.

It is found in the cytoplasm. It catalyses the reaction alpha-D-galactose 1-phosphate + UDP-alpha-D-glucose = alpha-D-glucose 1-phosphate + UDP-alpha-D-galactose. It participates in carbohydrate metabolism; galactose metabolism. The polypeptide is Galactose-1-phosphate uridylyltransferase (Enterococcus faecalis (strain ATCC 700802 / V583)).